The sequence spans 1408 residues: TSET complex member tstA (1408 aa).

Disordered regions lie at residues 259 to 347 (FWPT…SIIA), 998 to 1055 (QQSS…AVGS), and 1091 to 1139 (SSSS…TNLN). Positions 266 to 308 (NNNNNNNNQQINNNNNNNNNNNNNNNNNNNNNNNNNNNNNQNN) are enriched in low complexity. Residues 309 to 318 (LINGISSMNL) show a composition bias toward polar residues. 2 stretches are compositionally biased toward low complexity: residues 319–347 (SSIT…SIIA) and 998–1051 (QQSS…ISTS).

The protein belongs to the TPLATE family. As to quaternary structure, component of the TSET complex, a heterohexamer composed of tstA, tstB, tstC, tstD, tstE and tstF, which may act in plasma membrane turnover. tstA, tstB, tstC and tstD are likely to be the core complex members with tstE and tstF acting as associated scaffold proteins.

In Dictyostelium discoideum (Social amoeba), this protein is TSET complex member tstA.